Consider the following 123-residue polypeptide: Large ribosomal subunit protein uL14 (123 aa).

This sequence belongs to the universal ribosomal protein uL14 family. In terms of assembly, part of the 50S ribosomal subunit. Forms a cluster with proteins L3 and L19. In the 70S ribosome, L14 and L19 interact and together make contacts with the 16S rRNA in bridges B5 and B8.

In terms of biological role, binds to 23S rRNA. Forms part of two intersubunit bridges in the 70S ribosome. The chain is Large ribosomal subunit protein uL14 from Zymomonas mobilis subsp. mobilis (strain ATCC 31821 / ZM4 / CP4).